The primary structure comprises 658 residues: UvrABC system protein B (658 aa).

Positions 26–413 (EGINSGKKKQ…SPEVIEQIIR (388 aa)) constitute a Helicase ATP-binding domain. 39 to 46 (GATGTGKT) lines the ATP pocket. The Beta-hairpin motif lies at 92-115 (YYDYYQPEAYVPQTDTFIEKDAQI). In terms of domain architecture, Helicase C-terminal spans 430–596 (QIDDLLGEIQ…TIQKGVRDVI (167 aa)). Residues 622 to 657 (EKTIAKMEAEMKEAAKALDFERAAELRDLLLELKAE) enclose the UVR domain.

The protein belongs to the UvrB family. As to quaternary structure, forms a heterotetramer with UvrA during the search for lesions. Interacts with UvrC in an incision complex.

It is found in the cytoplasm. In terms of biological role, the UvrABC repair system catalyzes the recognition and processing of DNA lesions. A damage recognition complex composed of 2 UvrA and 2 UvrB subunits scans DNA for abnormalities. Upon binding of the UvrA(2)B(2) complex to a putative damaged site, the DNA wraps around one UvrB monomer. DNA wrap is dependent on ATP binding by UvrB and probably causes local melting of the DNA helix, facilitating insertion of UvrB beta-hairpin between the DNA strands. Then UvrB probes one DNA strand for the presence of a lesion. If a lesion is found the UvrA subunits dissociate and the UvrB-DNA preincision complex is formed. This complex is subsequently bound by UvrC and the second UvrB is released. If no lesion is found, the DNA wraps around the other UvrB subunit that will check the other stand for damage. This chain is UvrABC system protein B, found in Bacillus anthracis.